Consider the following 56-residue polypeptide: Attractin (56 aa).

Cystine bridges form between Cys4–Cys41, Cys13–Cys33, and Cys20–Cys26.

As to expression, produced by the albumen gland of the egg cordons.

It localises to the secreted. In terms of biological role, water-borne pheromone that attract the marine mollusk Aplysia into breeding aggregations and coordinate male and female reproductive behavior within the aggregation. This Aplysia vaccaria (California black sea hare) protein is Attractin (ATT).